The following is a 534-amino-acid chain: uncharacterized protein (534 aa).

3 disordered regions span residues 1 to 150 (MSDS…DIPP), 252 to 284 (RRFRRREDNERNNSNSPRNFSTHGNGNGENGQP), and 383 to 434 (WKSQ…PSLP). Residues 8–67 (SQREDNYSRDRRSRFTEDSYSRRDSQRSGNEAPRESRYYRKEEHLQERSRSRSPARDSRW) show a composition bias toward basic and acidic residues. A compositionally biased stretch (polar residues) spans 102–113 (SLQSTKATSSRT). The span at 130–141 (PSAPAPPLPPSS) shows a compositional bias: pro residues. Positions 252–262 (RRFRRREDNER) are enriched in basic and acidic residues. The segment covering 263-272 (NNSNSPRNFS) has biased composition (low complexity). Polar residues predominate over residues 393–408 (NQGNRAYNPPNRNQAF).

This is an uncharacterized protein from Schizosaccharomyces pombe (strain 972 / ATCC 24843) (Fission yeast).